Consider the following 602-residue polypeptide: MFPAQDALPRSGLNLKEEPLLPAGLGSVRSWMQGAGILDASTAAQSGVGLARAHFEKQPPSNLRKSNFFHFVLAMYDRQGQPVEVERTAFIDFVEKDREPGAEKTNNGIHYRLRLVYNNGLRTEQDLYVRLIDSMSKQAIIYEGQDKNPEMCRVLLTHEIMCSRCCDRKSCGNRNETPSDPVIIDRFFLKFFLKCNQNCLKNAGNPRDMRRFQVVVSTTVSVDGHVLAVSDNMFVHNNSKHGRRARRLDPSEAATPCIKAISPGEGWTTGGATVIVIGDNFFDGLQVVFGNVLVWSELITPHAIRVQTPPRHIPGVVEVTLSYKSKQFCKGCPGRFVYTALNEPTIDYGFQRLQKVIPRHPGDPERLPKEVLLKRAADLAEALYGVPGSNQELLLKRAADVAEALYSTPRAPGPLAPLAPSHPHPAVVGINAFSSPLAIAVGDATPGPEPGYARSCSSASPRGFAPSPGSQQSGYGGGLGAGLGGYGAPGVAGLGVPGSPSFLNGSTATSPFAIMPSSPPLAAASSMSLPAAAPTTSVFSFSPVNMISAVKQRSAFAPVLRPPSSPPQACPRAHGEGLPDQSFEDSDKFHSPARGLQGLAYS.

The segment at Arg64–Asn67 is interaction with DNA. Residues Cys152–Cys171 form a C5-type zinc finger. Interaction with DNA regions lie at residues Asn198 to Asn205 and Asn237 to Lys240. Residues Pro256–Tyr338 form the IPT/TIG domain. Disordered stretches follow at residues Pro448–Gly476 and Pro558–Ser602. Over residues Leu560 to Ala569 the composition is skewed to pro residues.

This sequence belongs to the COE family. In terms of assembly, forms either a homodimer or a heterodimer with a related family member. Interacts with MAPK3/ERK1. Interacts with STAT5A. In terms of tissue distribution, most highly expressed in cytotoxic NK cells, especially CD16(+) NK cells, followed by CD8(+) T-cells.

Its subcellular location is the nucleus. Functionally, transcription factor. Binds to specific sequence motif 5'-CCCNNG[GA]G-3' in regulatory elements of putative target immunoregulatory genes such as NKG7, GZMA, and TBX21. Positively modulates transcription of NKG7. May play a role in regulating FAS/CD95-mediated apoptosis in cytotoxic NK cells and T-cells, probably downstream of interleukin IL2 signaling. The protein is Transcription factor COE4 (EBF4) of Homo sapiens (Human).